Here is a 131-residue protein sequence, read N- to C-terminus: Plastocyanin (131 aa).

An N-terminal signal peptide occupies residues Met1–Ala34. Residues Ala35–Glu131 enclose the Plastocyanin-like domain. Cu cation-binding residues include His73, Cys116, His119, and Met124.

It belongs to the plastocyanin family. Cu(2+) serves as cofactor.

Its subcellular location is the cellular thylakoid membrane. Functionally, participates in electron transfer between P700 and the cytochrome b6-f complex in photosystem I. This Prochlorothrix hollandica protein is Plastocyanin (petE).